A 293-amino-acid chain; its full sequence is Ribosomal RNA small subunit methyltransferase A (293 aa).

S-adenosyl-L-methionine contacts are provided by Asn-33, Val-35, Gly-60, Glu-81, Asp-111, and Asn-130.

The protein belongs to the class I-like SAM-binding methyltransferase superfamily. rRNA adenine N(6)-methyltransferase family. RsmA subfamily.

The protein localises to the cytoplasm. It carries out the reaction adenosine(1518)/adenosine(1519) in 16S rRNA + 4 S-adenosyl-L-methionine = N(6)-dimethyladenosine(1518)/N(6)-dimethyladenosine(1519) in 16S rRNA + 4 S-adenosyl-L-homocysteine + 4 H(+). Specifically dimethylates two adjacent adenosines (A1518 and A1519) in the loop of a conserved hairpin near the 3'-end of 16S rRNA in the 30S particle. May play a critical role in biogenesis of 30S subunits. The polypeptide is Ribosomal RNA small subunit methyltransferase A (Corynebacterium glutamicum (strain ATCC 13032 / DSM 20300 / JCM 1318 / BCRC 11384 / CCUG 27702 / LMG 3730 / NBRC 12168 / NCIMB 10025 / NRRL B-2784 / 534)).